Here is a 97-residue protein sequence, read N- to C-terminus: Large ribosomal subunit protein uL30m (97 aa).

Belongs to the universal ribosomal protein uL30 family. Component of the mitochondrial large ribosomal subunit (mt-LSU). Mature yeast 74S mitochondrial ribosomes consist of a small (37S) and a large (54S) subunit. The 37S small subunit contains a 15S ribosomal RNA (15S mt-rRNA) and at least 32 different proteins. The 54S large subunit contains a 21S rRNA (21S mt-rRNA) and at least 45 different proteins.

The protein resides in the mitochondrion. Functionally, component of the mitochondrial ribosome (mitoribosome), a dedicated translation machinery responsible for the synthesis of mitochondrial genome-encoded proteins, including at least some of the essential transmembrane subunits of the mitochondrial respiratory chain. The mitoribosomes are attached to the mitochondrial inner membrane and translation products are cotranslationally integrated into the membrane. In Schizosaccharomyces pombe (strain 972 / ATCC 24843) (Fission yeast), this protein is Large ribosomal subunit protein uL30m (mrpl33).